We begin with the raw amino-acid sequence, 46 residues long: Antimicrobial peptide eNAP-1 (46 aa).

2 disulfides stabilise this stretch: Cys-4–Cys-16 and Cys-10–Cys-26.

Belongs to the granulin family.

The protein resides in the secreted. Its function is as follows. Has antimicrobial activity against Gram-negative and Gram-positive bacteria. In Equus caballus (Horse), this protein is Antimicrobial peptide eNAP-1.